The primary structure comprises 236 residues: Terpene cyclase andB (236 aa).

Helical transmembrane passes span 13 to 33, 45 to 65, 70 to 90, 106 to 126, 135 to 155, 166 to 186, and 200 to 220; these read TVVNLLGSASGIGWILNYILM, MSMLPLCCNIAWEFVYGILCP, VVRPVILSWLVLNCLVVYAAI, HLPLLFTVGIAACTGFHIALI, FLWSARSCQVLLSIGGLFQLL, VLWLSRFLGSICGVLKMTLMW, and LTAYCIALWIISDVLYGVVFY.

It belongs to the paxB family.

Its subcellular location is the membrane. The protein operates within secondary metabolite biosynthesis; terpenoid biosynthesis. Its function is as follows. Terpene cyclase; part of the gene cluster that mediates the biosynthesis of anditomin, a fungal meroterpenoid. The first step of the pathway is the synthesis of 3,5-dimethylorsellinic acid (DMOA) by the polyketide synthase andM. DMOA is then converted to the phthalide compound 5,7-dihydroxy-4,6-dimethylphthalide (DHDMP) by the cytochrome P450 monooxygenase andK, which is further prenylated by the prenyltransferase andD to yield farnesyl-DHDMP. Further epoxidation by the FAD-dependent monooxygenase andE leads to epoxyfarnesyl-DHDMP. The next step involves the terpene cyclase andB that converts epoxyfarnesyl-DHDMP into preandiloid A through opening of the epoxide ring followed by the cyclization of the farnesyl moiety. Preandiloid A is in turn oxidized at the C-3 hydroxyl group to yield preandiloid B by the dehydrogenase andC. The dioxygenase andA is solely responsible for the dehydrogenation of preandiloid B leading to the enone preandiloid C, as well as for the intriguing structural rearrangement to generate the bicyclo[2.2.2]octane core, transforming preandiloid C into andiconin. FAD-binding monooxygenase andJ then produces andilesin D which is reduced by dehydrogenase andI to yield andilesin A. Action of acetyltransferase andG followed by a spontaneous acetate elimination leads then to andilesin B, which is in turn substrate of the short chain dehydrogenase andH to yield andilesin C. Finally, the dioxygenase andF catalyzes the transformation of andilesin C to anditomin. This is Terpene cyclase andB from Emericella variicolor (Aspergillus stellatus).